The following is a 686-amino-acid chain: Mannan-binding lectin serine protease 2 (686 aa).

Residues 1–15 (MRLLTLLGLLCGSVA) form the signal peptide. One can recognise a CUB 1 domain in the interval 16-137 (TPLGPKWPEP…TGFEAFYAAE (122 aa)). Glu67, Asp75, Asp120, Ser122, Asn123, Asp138, Ile139, and Glu141 together coordinate Ca(2+). A disulfide bridge links Cys72 with Cys90. The 44-residue stretch at 138–181 (DIDECQVAPGEAPTCDHHCHNHLGGFYCSCRAGYVLHRNKRTCS) folds into the EGF-like; calcium-binding domain. Cystine bridges form between Cys142/Cys156, Cys152/Cys165, Cys167/Cys180, Cys184/Cys211, Cys241/Cys259, Cys300/Cys348, Cys328/Cys361, Cys366/Cys412, Cys396/Cys430, Cys434/Cys552, Cys598/Cys618, and Cys629/Cys660. Residues Asn158, His159, and Gly162 each contribute to the Ca(2+) site. Position 158 is a (3R)-3-hydroxyasparagine (Asn158). The region spanning 184 to 296 (CSGQVFTQRS…TGWKIHYTST (113 aa)) is the CUB 2 domain. 2 consecutive Sushi domains span residues 298–363 (QPCP…ACSI) and 364–432 (VDCG…VCEP). In terms of domain architecture, Peptidase S1 spans 445–684 (IYGGQKAKPG…YIPWIENIIS (240 aa)). Catalysis depends on charge relay system residues His483 and Asp532. The active-site Charge relay system is the Ser633.

This sequence belongs to the peptidase S1 family. Homodimer; disulfide-linked. Binds MBL2. Isoform 2 binds to MASP1. Binds SERPING1. Dimerization and MBL2 binding requires calcium ions. The iron and 2-oxoglutarate dependent 3-hydroxylation of aspartate and asparagine is (R) stereospecific within EGF domains. In terms of processing, activated by cleavage after Arg-444. The uncleaved zymogen is inactive towards synthetic substrates, but has sufficient activity to effect autocatalytic cleavage. As to expression, plasma.

It is found in the secreted. The catalysed reaction is Selective cleavage after Arg-223 in complement component C2 (-Ser-Leu-Gly-Arg-|-Lys-Ile-Gln-Ile) and after Arg-76 in complement component C4 (-Gly-Leu-Gln-Arg-|-Ala-Leu-Glu-Ile).. Functionally, serum protease that plays an important role in the activation of the complement system via mannose-binding lectin. After activation by auto-catalytic cleavage it cleaves C2 and C4, leading to their activation and to the formation of C3 convertase. This chain is Mannan-binding lectin serine protease 2 (MASP2), found in Homo sapiens (Human).